Consider the following 149-residue polypeptide: Transcriptional repressor NrdR (149 aa).

Residues 3–34 (CPFCSTEETKVIDSRLVSDGYQVRRRRECTKC) fold into a zinc finger. Positions 49-139 (PKIIKNNGMR…VYLSFENINE (91 aa)) constitute an ATP-cone domain.

This sequence belongs to the NrdR family. Zn(2+) serves as cofactor.

Negatively regulates transcription of bacterial ribonucleotide reductase nrd genes and operons by binding to NrdR-boxes. This chain is Transcriptional repressor NrdR, found in Mannheimia succiniciproducens (strain KCTC 0769BP / MBEL55E).